Consider the following 38-residue polypeptide: Beta-defensin 1 (38 aa).

3 disulfides stabilise this stretch: Cys-5/Cys-34, Cys-12/Cys-27, and Cys-17/Cys-35.

It belongs to the beta-defensin family. In terms of assembly, monomer. Homodimer. In terms of tissue distribution, neutrophilic granules.

It is found in the secreted. The protein localises to the membrane. Its function is as follows. Has bactericidal activity. Active against E.coli ML35 but not against S.aureus 502A. May act as a ligand for C-C chemokine receptor CCR6. Positively regulates the sperm motility and bactericidal activity in a CCR6-dependent manner. Binds to CCR6 and triggers Ca2+ mobilization in the sperm which is important for its motility. The protein is Beta-defensin 1 (DEFB1) of Bos taurus (Bovine).